A 96-amino-acid polypeptide reads, in one-letter code: Large ribosomal subunit protein uL23 (96 aa).

Belongs to the universal ribosomal protein uL23 family. As to quaternary structure, part of the 50S ribosomal subunit. Contacts protein L29, and trigger factor when it is bound to the ribosome.

One of the early assembly proteins it binds 23S rRNA. One of the proteins that surrounds the polypeptide exit tunnel on the outside of the ribosome. Forms the main docking site for trigger factor binding to the ribosome. The chain is Large ribosomal subunit protein uL23 from Finegoldia magna (strain ATCC 29328 / DSM 20472 / WAL 2508) (Peptostreptococcus magnus).